We begin with the raw amino-acid sequence, 64 residues long: Large ribosomal subunit protein bL35 (64 aa).

Positions 1-26 (MPKMKTKSAAAKRFKTTKSGKIKRKQ) are enriched in basic residues. The interval 1 to 46 (MPKMKTKSAAAKRFKTTKSGKIKRKQAYTSHLAPNKTTKQKRHLRK) is disordered.

It belongs to the bacterial ribosomal protein bL35 family.

This is Large ribosomal subunit protein bL35 from Mycoplasmoides gallisepticum (strain R(low / passage 15 / clone 2)) (Mycoplasma gallisepticum).